Here is a 922-residue protein sequence, read N- to C-terminus: Pertactin autotransporter (922 aa).

Residues 1–34 form the signal peptide; the sequence is MNMSLSRIVKAAPLRRTTLAMALGALGAAPAAYA. The Cell attachment site; involved in adhesion to various eukaryotic cell lines signature appears at 260–262; that stretch reads RGD. 3 tandem repeats follow at residues 266-270, 271-275, and 276-280. Residues 266–290 are 4 X 5 AA tandem repeats of G-G-A-V-P; it reads GGAVPGGAVPGGAVPGGFGPLLDGW. One copy of the 4; approximate repeat lies at 281–285; that stretch reads GGFGP. Residues 561–619 form a disordered region; sequence SLVGAKAPPAPKPAPQPGPQPGPQPPQPPQPPQPPQPPQPPQRQPEAPAPQPPAGRELS. Over residues 568–613 the composition is skewed to pro residues; the sequence is PPAPKPAPQPGPQPGPQPPQPPQPPQPPQPPQPPQRQPEAPAPQPP. The interval 575-603 is 9 X 3 AA approximate repeats of P-Q-P; that stretch reads PQPGPQPGPQPPQPPQPPQPPQPPQPPQR. In terms of domain architecture, Autotransporter spans 654-922; it reads LNPDAGGAWG…TFHAGYRYSW (269 aa).

In terms of assembly, monomer.

It localises to the periplasm. The protein localises to the secreted. It is found in the cell surface. The protein resides in the cell outer membrane. Functionally, agglutinogen that binds to eukaryotic cells; a process mediated by the R-G-D sequence. Pertactin may have a role in bacterial adhesion, and thus play a role in virulence. May contribute to the disease state of whooping cough. In Bordetella parapertussis (strain 12822 / ATCC BAA-587 / NCTC 13253), this protein is Pertactin autotransporter (prn).